The chain runs to 98 residues: NADH-ubiquinone oxidoreductase chain 4L (98 aa).

Helical transmembrane passes span 2-22 (PSIS…MLMF), 28-48 (SSLL…TLII), and 61-81 (IMLL…LVMV).

This sequence belongs to the complex I subunit 4L family. As to quaternary structure, core subunit of respiratory chain NADH dehydrogenase (Complex I) which is composed of 45 different subunits.

Its subcellular location is the mitochondrion inner membrane. The enzyme catalyses a ubiquinone + NADH + 5 H(+)(in) = a ubiquinol + NAD(+) + 4 H(+)(out). Its function is as follows. Core subunit of the mitochondrial membrane respiratory chain NADH dehydrogenase (Complex I) which catalyzes electron transfer from NADH through the respiratory chain, using ubiquinone as an electron acceptor. Part of the enzyme membrane arm which is embedded in the lipid bilayer and involved in proton translocation. The chain is NADH-ubiquinone oxidoreductase chain 4L (MT-ND4L) from Allocebus trichotis (Hairy-eared dwarf lemur).